The chain runs to 103 residues: Small ribosomal subunit protein uS10 (103 aa).

Belongs to the universal ribosomal protein uS10 family. Part of the 30S ribosomal subunit.

In terms of biological role, involved in the binding of tRNA to the ribosomes. This Vibrio campbellii (strain ATCC BAA-1116) protein is Small ribosomal subunit protein uS10.